A 375-amino-acid polypeptide reads, in one-letter code: Chaperone protein DnaJ (375 aa).

A J domain is found at 5-68 (DYYEILGVSK…KKRAQYDQFG (64 aa)). The CR-type zinc finger occupies 135 to 217 (GISKNINYDR…CYGKKVINER (83 aa)). Zn(2+) is bound by residues Cys-148, Cys-151, Cys-165, Cys-168, Cys-191, Cys-194, Cys-205, and Cys-208. CXXCXGXG motif repeat units lie at residues 148 to 155 (CHKCQGTG), 165 to 172 (CTKCHGRG), 191 to 198 (CHECEGTG), and 205 to 212 (CEQCYGKK).

The protein belongs to the DnaJ family. Homodimer. Zn(2+) is required as a cofactor.

The protein localises to the cytoplasm. Participates actively in the response to hyperosmotic and heat shock by preventing the aggregation of stress-denatured proteins and by disaggregating proteins, also in an autonomous, DnaK-independent fashion. Unfolded proteins bind initially to DnaJ; upon interaction with the DnaJ-bound protein, DnaK hydrolyzes its bound ATP, resulting in the formation of a stable complex. GrpE releases ADP from DnaK; ATP binding to DnaK triggers the release of the substrate protein, thus completing the reaction cycle. Several rounds of ATP-dependent interactions between DnaJ, DnaK and GrpE are required for fully efficient folding. Also involved, together with DnaK and GrpE, in the DNA replication of plasmids through activation of initiation proteins. This chain is Chaperone protein DnaJ, found in Ureaplasma parvum serovar 3 (strain ATCC 700970).